Here is a 531-residue protein sequence, read N- to C-terminus: NAD(P)H-quinone oxidoreductase chain 4 (531 aa).

14 helical membrane-spanning segments follow: residues 9-29, 41-61, 93-113, 117-137, 141-161, 173-193, 217-237, 248-268, 282-302, 311-331, 337-357, 381-401, 422-442, and 469-489; these read FPWL…IPFF, FALS…INGF, MPLI…AWPV, PKLF…VFAV, LLFF…LAIW, FIIY…AMGF, IFCY…VPLH, TAPV…YALL, FAPL…LTSF, IAYS…SFSS, AMLQ…LVGA, FALW…SGFV, VVMA…LLSM, and VYII…PRLV.

The protein belongs to the complex I subunit 4 family.

It is found in the cellular thylakoid membrane. The catalysed reaction is a plastoquinone + NADH + (n+1) H(+)(in) = a plastoquinol + NAD(+) + n H(+)(out). It carries out the reaction a plastoquinone + NADPH + (n+1) H(+)(in) = a plastoquinol + NADP(+) + n H(+)(out). In terms of biological role, NDH-1 shuttles electrons from NAD(P)H, via FMN and iron-sulfur (Fe-S) centers, to quinones in the respiratory chain. The immediate electron acceptor for the enzyme in this species is believed to be plastoquinone. Couples the redox reaction to proton translocation (for every two electrons transferred, four hydrogen ions are translocated across the cytoplasmic membrane), and thus conserves the redox energy in a proton gradient. The polypeptide is NAD(P)H-quinone oxidoreductase chain 4 (Prochlorococcus marinus (strain MIT 9301)).